We begin with the raw amino-acid sequence, 218 residues long: Interleukin-37 (218 aa).

A disordered region spans residues 1 to 40 (MSFVGENSGVKMGSEDWEKDEPQCCLEDPAGSPLEPGPSL). A propeptide spans 1–45 (MSFVGENSGVKMGSEDWEKDEPQCCLEDPAGSPLEPGPSLPTMNF) (removed in mature form). The span at 13–22 (GSEDWEKDEP) shows a compositional bias: basic and acidic residues.

Belongs to the IL-1 family. As to quaternary structure, interacts with SMAD3. Binds IL18R1, but not to IL1R1, with lower affinity than IL18, and does not seem to act as a receptor antagonist for IL18. Interacts with cargo receptor TMED10; the interaction mediates the translocation from the cytoplasm into the ERGIC (endoplasmic reticulum-Golgi intermediate compartment) and thereby secretion. In terms of processing, proteolytically converted to the mature form by CASP1. As to expression, in general, low constitutive expression, if any, in healthy tissues; high expression in inflammatory counterparts, including in synovial tissues from individuals with active rheumatoid arthritis. Isoform A, isoform B and isoform C are expressed in testis, colon, placenta, lung and lymph node. Isoform D and isoform E were found only in testis and bone marrow. Whereas only isoform A is found in brain, only isoform B in kidney and only isoform C in heart.

It is found in the cytoplasm. The protein localises to the cytosol. Its subcellular location is the nucleus. It localises to the secreted. Its function is as follows. Immune regulatory cytokine that acts as a suppressor of innate inflammatory and immune responses involved in curbing excessive inflammation. Signaling can occur via two mechanisms, intracellularly through nuclear translocation with SMAD3 and extracellularly after secretion and binding to its receptor composed of IL18R1 and IL18RAP. Suppresses, or reduces, pro-inflammatory cytokine production, including IL1A and IL6, as well as CCL12, CSF1, CSF2, CXCL13, IL1B, IL23A and IL1RN, but spares anti-inflammatory cytokines. Inhibits dendritic cell activation. This is Interleukin-37 from Homo sapiens (Human).